The chain runs to 423 residues: UDP-N-acetylglucosamine 1-carboxyvinyltransferase 1 (423 aa).

23–24 serves as a coordination point for phosphoenolpyruvate; the sequence is KN. Arg96 is a UDP-N-acetyl-alpha-D-glucosamine binding site. The Proton donor role is filled by Cys120. Cys120 carries the 2-(S-cysteinyl)pyruvic acid O-phosphothioketal modification. UDP-N-acetyl-alpha-D-glucosamine contacts are provided by residues 125 to 129, Asp309, and Val331; that span reads RPIDL.

It belongs to the EPSP synthase family. MurA subfamily.

Its subcellular location is the cytoplasm. The catalysed reaction is phosphoenolpyruvate + UDP-N-acetyl-alpha-D-glucosamine = UDP-N-acetyl-3-O-(1-carboxyvinyl)-alpha-D-glucosamine + phosphate. It functions in the pathway cell wall biogenesis; peptidoglycan biosynthesis. Its function is as follows. Cell wall formation. Adds enolpyruvyl to UDP-N-acetylglucosamine. This chain is UDP-N-acetylglucosamine 1-carboxyvinyltransferase 1, found in Streptococcus mutans serotype c (strain ATCC 700610 / UA159).